A 347-amino-acid polypeptide reads, in one-letter code: Protein RecA (347 aa).

65–72 lines the ATP pocket; it reads GPESSGKT. The segment at 325–347 is disordered; that stretch reads KLGISDGDVEETEDAPKSLFDEE. Over residues 338–347 the composition is skewed to basic and acidic residues; the sequence is DAPKSLFDEE.

Belongs to the RecA family.

The protein resides in the cytoplasm. In terms of biological role, can catalyze the hydrolysis of ATP in the presence of single-stranded DNA, the ATP-dependent uptake of single-stranded DNA by duplex DNA, and the ATP-dependent hybridization of homologous single-stranded DNAs. It interacts with LexA causing its activation and leading to its autocatalytic cleavage. This Staphylococcus aureus (strain Mu3 / ATCC 700698) protein is Protein RecA.